We begin with the raw amino-acid sequence, 387 residues long: Putative ankyrin repeat protein RBE_0984 (387 aa).

5 ANK repeats span residues tyrosine 50 to isoleucine 79, histidine 88 to valine 119, arginine 123 to valine 154, histidine 159 to isoleucine 188, and valine 210 to glutamate 239. 2 coiled-coil regions span residues phenylalanine 251–glutamate 278 and serine 311–lysine 352.

This is Putative ankyrin repeat protein RBE_0984 from Rickettsia bellii (strain RML369-C).